Reading from the N-terminus, the 1073-residue chain is MEHVLPGQAPIRDFVHHNTLHGFQHLPFAAALEEAERLTGIRGYLPENEFRALHRKGRIDDADIDTVLDRHLGAAGEEILAVAGGEPVTRRQIHRLRLTVDLEPVDPARFTWLVDELEALDRFDPEVSPEARRRLMESAKRGRGEAVASRRLVRDLWDACLERLGLGDYTASHPEDLLGHAIAHAEALYADFKAESSGGGLSVSHRAMREEARALLAEEIDAVGREQTLRGFILKLTGQDVLDRVRPQLIRHCASHLDEGLAAWHSPDRSLGFYAAWKRSMRHGAEGGLGEVPLGHAELDALPDDPAEVVVFELEQRGIPLPYWEGYLERLALELPGWSGMMNWRAHRPLYRANRTAPVSLMDYLAVRLILDRRYLGRICSETWGIGGHIGELARYFEAHLSEFVVRHALYCGDLPEFLAATCADLVRRAGCERVDRKPWRVAADMIFSWRHAPGAGRDLRIRLHGSGWRLFKLAQHLGLSAHDVQALSASEIERLLCALDELTPAQRGYLWLCAYERHYREPLFNALASNHGRGRWATRDERPQAQIVFCMDDREEGVRRHLEELNPAVETLGAAGFFGIPMYWQGLDDAEPSALCPIVVIPSHEVREVPRPGEEAARRLHDHRRGVVRLLGRVFNQEIRRNLLSSHLLIDLVAPGVAVGLIAKVLLPRWAATLSRWLADLWMPEVPTTLALHAADDAAPAGPEQPRPGLTDAEQADRVAAFLLNIGLTQGFAPIVVLMGHGSASRNNPHLAAYDCGACSGRHGGPNARVFAAMANRPQVREQLAQRGLVVPADTWFVGAEHNTCSEEITWFDVQDIPPLSRIGWHAFAAQLDEACRLSAQERCRRFASAPRRPSPARALRHVSTRSVDFSQARPELGHATNAAALIGRRSVSRGLFLDRRVFLISYDPTRDPEGRILEGILLAAGPVGAGINLEYYFSTVNNERHGCGSKVAHNVTGLFGIMEGAASDLRTGLPRQMAEVHEAMRLQVVVEQTPEILAAIYRRQPPIRELVGNGWILLSAIDPGDGTISVFDPERGFVPWAGAATDMALCGRSTDWFEGHVEPLAPALIAV.

4 residues coordinate Zn(2+): C551, D553, H742, and C757.

It belongs to the inorganic carbon transporter (TC 9.A.2) DabA family. As to quaternary structure, forms a complex with DabB. Zn(2+) serves as cofactor.

The protein resides in the cell inner membrane. Functionally, part of an energy-coupled inorganic carbon pump. This is Probable inorganic carbon transporter subunit DabA from Methylococcus capsulatus (strain ATCC 33009 / NCIMB 11132 / Bath).